The following is a 20-amino-acid chain: Citrate synthase (20 aa).

It belongs to the citrate synthase family. In terms of assembly, homodimer.

The catalysed reaction is oxaloacetate + acetyl-CoA + H2O = citrate + CoA + H(+). It functions in the pathway carbohydrate metabolism; tricarboxylic acid cycle; isocitrate from oxaloacetate: step 1/2. The sequence is that of Citrate synthase from Populus euphratica (Euphrates poplar).